We begin with the raw amino-acid sequence, 81 residues long: Putative membrane protein insertion efficiency factor (81 aa).

The segment at 61–81 is disordered; it reads NDGGFDPVPPAPSSRTSSIAE.

It belongs to the UPF0161 family.

The protein localises to the cell inner membrane. Could be involved in insertion of integral membrane proteins into the membrane. This is Putative membrane protein insertion efficiency factor from Pseudomonas putida (strain ATCC 700007 / DSM 6899 / JCM 31910 / BCRC 17059 / LMG 24140 / F1).